Here is a 40-residue protein sequence, read N- to C-terminus: Dermonecrotic toxin LgSicTox-alphaI-1 (40 aa).

Mg(2+) is bound by residues glutamate 32 and aspartate 34.

Belongs to the arthropod phospholipase D family. Class II subfamily. Mg(2+) is required as a cofactor. Contains 2 disulfide bonds. As to expression, expressed by the venom gland.

The protein resides in the secreted. It carries out the reaction an N-(acyl)-sphingosylphosphocholine = an N-(acyl)-sphingosyl-1,3-cyclic phosphate + choline. The enzyme catalyses an N-(acyl)-sphingosylphosphoethanolamine = an N-(acyl)-sphingosyl-1,3-cyclic phosphate + ethanolamine. The catalysed reaction is a 1-acyl-sn-glycero-3-phosphocholine = a 1-acyl-sn-glycero-2,3-cyclic phosphate + choline. It catalyses the reaction a 1-acyl-sn-glycero-3-phosphoethanolamine = a 1-acyl-sn-glycero-2,3-cyclic phosphate + ethanolamine. Dermonecrotic toxins cleave the phosphodiester linkage between the phosphate and headgroup of certain phospholipids (sphingolipid and lysolipid substrates), forming an alcohol (often choline) and a cyclic phosphate. This toxin acts on sphingomyelin (SM). It may also act on ceramide phosphoethanolamine (CPE), lysophosphatidylcholine (LPC) and lysophosphatidylethanolamine (LPE), but not on lysophosphatidylserine (LPS), and lysophosphatidylglycerol (LPG). It acts by transphosphatidylation, releasing exclusively cyclic phosphate products as second products. In vivo, intradermal injection induces dermonecrosis. Induces, hemolysis, vascular permeability, edema, inflammatory response, and platelet aggregation. In Loxosceles gaucho (Spider), this protein is Dermonecrotic toxin LgSicTox-alphaI-1.